A 122-amino-acid chain; its full sequence is Large ribosomal subunit protein uL14c (122 aa).

The protein belongs to the universal ribosomal protein uL14 family. As to quaternary structure, part of the 50S ribosomal subunit.

Its subcellular location is the plastid. It is found in the chloroplast. In terms of biological role, binds to 23S rRNA. This is Large ribosomal subunit protein uL14c from Stigeoclonium helveticum (Green alga).